A 95-amino-acid chain; its full sequence is Succinate dehydrogenase membrane anchor subunit (95 aa).

Over 1–19 (MYKTLLAQVFFHSIAKKKL) the chain is Mitochondrial matrix. Residues 20–40 (YFFWLPRLFSLLLVPGFLFDI) form a helical membrane-spanning segment. A topological domain (mitochondrial intermembrane) is located at residue E41. Residues 42 to 62 (ILFLFHPIILLHASLGLSVII) form a helical membrane-spanning segment. H53 is a heme binding site. Residues 63-74 (EDYIHIETIKFQ) are Mitochondrial matrix-facing. Y65 contacts a ubiquinone. Residues 75–95 (YLSLIKLLLVLLINLNILYLL) form a helical membrane-spanning segment.

Part of an enzyme complex containing four subunits: a flavoprotein, an iron-sulfur protein, plus two membrane-anchoring proteins. It depends on heme as a cofactor.

Its subcellular location is the mitochondrion inner membrane. Its pathway is carbohydrate metabolism; tricarboxylic acid cycle. Its function is as follows. Membrane-anchoring subunit of succinate dehydrogenase (SDH). In Porphyra purpurea (Red seaweed), this protein is Succinate dehydrogenase membrane anchor subunit (SDH4).